The chain runs to 287 residues: Protease HtpX (287 aa).

2 helical membrane-spanning segments follow: residues Ile4–Ile24 and Gly33–Ile53. Residue His139 coordinates Zn(2+). Residue Glu140 is part of the active site. His143 serves as a coordination point for Zn(2+). The next 2 membrane-spanning stretches (helical) occupy residues Leu154–Ile174 and Ala195–Phe215. Residue Glu220 coordinates Zn(2+).

It belongs to the peptidase M48B family. Zn(2+) is required as a cofactor.

Its subcellular location is the cell inner membrane. This is Protease HtpX from Shewanella sp. (strain ANA-3).